The sequence spans 141 residues: MPDGVGRELPRDGTVLAFDYGEKKIGVALGNFVTRHATALTILPNVSVEGRFQAVGELIREWTPVQLVVGMPVNPEGGEQPSMRLARRFGNQLNGRYSLPVEWVDERYSSRMAAMGGARRGELDAEAARIILQQYFDQLPL.

It belongs to the YqgF nuclease family.

It is found in the cytoplasm. Functionally, could be a nuclease involved in processing of the 5'-end of pre-16S rRNA. This Cupriavidus pinatubonensis (strain JMP 134 / LMG 1197) (Cupriavidus necator (strain JMP 134)) protein is Putative pre-16S rRNA nuclease.